A 280-amino-acid chain; its full sequence is uncharacterized protein (280 aa).

Transmembrane regions (helical) follow at residues 46–66 (LIFL…FVCT), 81–101 (IACS…FLIP), 114–134 (FFYL…SWVV), 137–157 (VWHF…IKLQ), 170–190 (ILFI…LLEL), and 225–245 (IVAC…ALIV). The segment at 258–280 (ESGSIEKKNKSSPPPRTWQSNYQ) is disordered.

Belongs to the TatC family.

The protein resides in the mitochondrion membrane. This is an uncharacterized protein from Arabidopsis thaliana (Mouse-ear cress).